A 345-amino-acid chain; its full sequence is Heat-inducible transcription repressor HrcA (345 aa).

The protein belongs to the HrcA family.

In terms of biological role, negative regulator of class I heat shock genes (grpE-dnaK-dnaJ and groELS operons). Prevents heat-shock induction of these operons. This chain is Heat-inducible transcription repressor HrcA, found in Tetragenococcus halophilus (Pediococcus halophilus).